The primary structure comprises 344 residues: Dihydroorotase (344 aa).

2 residues coordinate Zn(2+): histidine 13 and histidine 15. Substrate contacts are provided by residues 15–17 and asparagine 41; that span reads HFR. 3 residues coordinate Zn(2+): lysine 98, histidine 135, and histidine 173. An N6-carboxylysine modification is found at lysine 98. Residue histidine 135 participates in substrate binding. Residue leucine 218 participates in substrate binding. Position 246 (aspartate 246) interacts with Zn(2+). Aspartate 246 is a catalytic residue. The substrate site is built by histidine 250 and alanine 262.

This sequence belongs to the metallo-dependent hydrolases superfamily. DHOase family. Class II DHOase subfamily. In terms of assembly, homodimer. Zn(2+) is required as a cofactor.

The catalysed reaction is (S)-dihydroorotate + H2O = N-carbamoyl-L-aspartate + H(+). The protein operates within pyrimidine metabolism; UMP biosynthesis via de novo pathway; (S)-dihydroorotate from bicarbonate: step 3/3. Its function is as follows. Catalyzes the reversible cyclization of carbamoyl aspartate to dihydroorotate. This is Dihydroorotase from Pseudoalteromonas atlantica (strain T6c / ATCC BAA-1087).